Here is a 303-residue protein sequence, read N- to C-terminus: Oxygen-dependent coproporphyrinogen-III oxidase (303 aa).

Ser93 is a binding site for substrate. Positions 97 and 107 each coordinate a divalent metal cation. His107 functions as the Proton donor in the catalytic mechanism. Residue 109-111 (NVR) coordinates substrate. Residues His149 and His179 each contribute to the a divalent metal cation site. The tract at residues 244–279 (YVEFNLVFDRGTLFGLQSGGRTESILLSMPPMAQWR) is important for dimerization. 262–264 (GGR) provides a ligand contact to substrate.

The protein belongs to the aerobic coproporphyrinogen-III oxidase family. In terms of assembly, homodimer. Requires a divalent metal cation as cofactor.

It is found in the cytoplasm. It carries out the reaction coproporphyrinogen III + O2 + 2 H(+) = protoporphyrinogen IX + 2 CO2 + 2 H2O. The protein operates within porphyrin-containing compound metabolism; protoporphyrin-IX biosynthesis; protoporphyrinogen-IX from coproporphyrinogen-III (O2 route): step 1/1. Involved in the heme biosynthesis. Catalyzes the aerobic oxidative decarboxylation of propionate groups of rings A and B of coproporphyrinogen-III to yield the vinyl groups in protoporphyrinogen-IX. The polypeptide is Oxygen-dependent coproporphyrinogen-III oxidase (Bordetella petrii (strain ATCC BAA-461 / DSM 12804 / CCUG 43448)).